Here is a 148-residue protein sequence, read N- to C-terminus: Large-conductance mechanosensitive channel (148 aa).

A run of 2 helical transmembrane segments spans residues 9 to 29 and 79 to 99; these read AFAV…GAAF and IQTV…VKAI.

This sequence belongs to the MscL family. As to quaternary structure, homopentamer.

It localises to the cell inner membrane. In terms of biological role, channel that opens in response to stretch forces in the membrane lipid bilayer. May participate in the regulation of osmotic pressure changes within the cell. This is Large-conductance mechanosensitive channel from Pseudomonas syringae pv. syringae (strain B728a).